The sequence spans 276 residues: Imidazole glycerol phosphate synthase subunit HisF (276 aa).

Active-site residues include D11 and D130.

It belongs to the HisA/HisF family. In terms of assembly, heterodimer of HisH and HisF.

The protein localises to the cytoplasm. It catalyses the reaction 5-[(5-phospho-1-deoxy-D-ribulos-1-ylimino)methylamino]-1-(5-phospho-beta-D-ribosyl)imidazole-4-carboxamide + L-glutamine = D-erythro-1-(imidazol-4-yl)glycerol 3-phosphate + 5-amino-1-(5-phospho-beta-D-ribosyl)imidazole-4-carboxamide + L-glutamate + H(+). It participates in amino-acid biosynthesis; L-histidine biosynthesis; L-histidine from 5-phospho-alpha-D-ribose 1-diphosphate: step 5/9. IGPS catalyzes the conversion of PRFAR and glutamine to IGP, AICAR and glutamate. The HisF subunit catalyzes the cyclization activity that produces IGP and AICAR from PRFAR using the ammonia provided by the HisH subunit. This Beijerinckia indica subsp. indica (strain ATCC 9039 / DSM 1715 / NCIMB 8712) protein is Imidazole glycerol phosphate synthase subunit HisF.